A 265-amino-acid polypeptide reads, in one-letter code: Phosphate import ATP-binding protein PstB (265 aa).

The ABC transporter domain maps to M18–I260. G50–S57 is an ATP binding site.

Belongs to the ABC transporter superfamily. Phosphate importer (TC 3.A.1.7) family. The complex is composed of two ATP-binding proteins (PstB), two transmembrane proteins (PstC and PstA) and a solute-binding protein (PstS).

The protein localises to the cell inner membrane. It carries out the reaction phosphate(out) + ATP + H2O = ADP + 2 phosphate(in) + H(+). Its function is as follows. Part of the ABC transporter complex PstSACB involved in phosphate import. Responsible for energy coupling to the transport system. The protein is Phosphate import ATP-binding protein PstB of Ruegeria pomeroyi (strain ATCC 700808 / DSM 15171 / DSS-3) (Silicibacter pomeroyi).